The sequence spans 976 residues: Mast/stem cell growth factor receptor kita (976 aa).

A signal peptide spans 1–21; sequence MEYHCVLFTVLLQLIIQPGRS. Topologically, residues 22 to 515 are extracellular; the sequence is RPTITPEGPR…NTVPHELFTP (494 aa). 5 Ig-like C2-type domains span residues 23–105, 100–199, 206–301, 308–402, and 399–504; these read PTIT…VYVK, IYVY…LTVR, PPIT…VWVN, INIT…FEVH, and FEVH…FSIS. N-linked (GlcNAc...) asparagine glycans are attached at residues Asn39 and Asn47. Intrachain disulfides connect Cys44/Cys89, Cys131/Cys180, Cys146/Cys177, and Cys228/Cys285. N-linked (GlcNAc...) asparagine glycosylation is found at Asn282, Asn309, Asn315, Asn352, Asn449, and Asn477. A disulfide bond links Cys422 and Cys488. A helical membrane pass occupies residues 516–536; that stretch reads LLIGFVAAAVILVLILIVLTY. The Cytoplasmic portion of the chain corresponds to 537-976; the sequence is KYMQKPKYQI…DRSSPSHPVV (440 aa). Tyr559 lines the Mg(2+) pocket. A phosphotyrosine; by autocatalysis mark is found at Tyr559 and Tyr561. The Protein kinase domain maps to 580–922; that stretch reads LRFGKTLGSG…ISDSTKHIYL (343 aa). ATP-binding positions include 587-594, Lys614, and 662-668; these read GSGAFGKV and EYCCFGD. Residues Tyr691 and Tyr707 each carry the phosphotyrosine; by autocatalysis modification. Asp777 acts as the Proton acceptor in catalysis. An ATP-binding site is contributed by Arg781. Asn782 and Asp795 together coordinate Mg(2+). Residues Tyr808 and Tyr921 each carry the phosphotyrosine; by autocatalysis modification. The segment at 929 to 976 is disordered; the sequence is PAAPGPREESSSHVHRLNSVGSHSTATQPLLSSNDVFLDRSSPSHPVV. Polar residues predominate over residues 947–976; that stretch reads SVGSHSTATQPLLSSNDVFLDRSSPSHPVV.

This sequence belongs to the protein kinase superfamily. Tyr protein kinase family. CSF-1/PDGF receptor subfamily. Post-translationally, ubiquitinated. Rapidly ubiquitinated after autophosphorylation induced by kitlg/scf binding, leading to internalization and degradation. Autophosphorylated on tyrosine residues. Phosphorylated tyrosine residues are important for interaction with specific binding partners. In terms of tissue distribution, expressed in cells of the neural crest-melanocyte lineage. In the embryo, also expressed in mesodermal cells that give rise to hematopoietic precursors, notochord, neural crest-derived cells of the branchial arches, pineal gland, retina and mechanoreceptive sensory cells of lateral line neuromasts. Not detected in primordial germ cells or larval gut.

The protein localises to the cell membrane. The enzyme catalyses L-tyrosyl-[protein] + ATP = O-phospho-L-tyrosyl-[protein] + ADP + H(+). In terms of biological role, tyrosine-protein kinase that acts as a cell-surface receptor for the cytokine kitlg/scf and plays a role in the regulation of cell survival and proliferation, hematopoiesis, stem cell maintenance, gametogenesis, and in mast cell development, migration and function. Required for the migration of cells in the melanocyte lineage and the survival of embryonic melanocytes. Required for the differentiation of some, but not all, melanocytes. Not essential for hematopoiesis or primordial germ cell development. This Danio rerio (Zebrafish) protein is Mast/stem cell growth factor receptor kita (kita).